The following is a 239-amino-acid chain: 4-hydroxy-tetrahydrodipicolinate reductase (239 aa).

Residues 9–14 (GINGKI), 78–80 (GTT), and 104–107 (APNF) contribute to the NAD(+) site. The active-site Proton donor/acceptor is the His134. His135 is a binding site for (S)-2,3,4,5-tetrahydrodipicolinate. Lys138 (proton donor) is an active-site residue. (S)-2,3,4,5-tetrahydrodipicolinate is bound at residue 144–145 (GT).

This sequence belongs to the DapB family.

Its subcellular location is the cytoplasm. The enzyme catalyses (S)-2,3,4,5-tetrahydrodipicolinate + NAD(+) + H2O = (2S,4S)-4-hydroxy-2,3,4,5-tetrahydrodipicolinate + NADH + H(+). The catalysed reaction is (S)-2,3,4,5-tetrahydrodipicolinate + NADP(+) + H2O = (2S,4S)-4-hydroxy-2,3,4,5-tetrahydrodipicolinate + NADPH + H(+). The protein operates within amino-acid biosynthesis; L-lysine biosynthesis via DAP pathway; (S)-tetrahydrodipicolinate from L-aspartate: step 4/4. Functionally, catalyzes the conversion of 4-hydroxy-tetrahydrodipicolinate (HTPA) to tetrahydrodipicolinate. In Coxiella burnetii (strain CbuG_Q212) (Coxiella burnetii (strain Q212)), this protein is 4-hydroxy-tetrahydrodipicolinate reductase.